We begin with the raw amino-acid sequence, 92 residues long: Small ribosomal subunit protein uS19 (92 aa).

This sequence belongs to the universal ribosomal protein uS19 family.

Functionally, protein S19 forms a complex with S13 that binds strongly to the 16S ribosomal RNA. In Corynebacterium efficiens (strain DSM 44549 / YS-314 / AJ 12310 / JCM 11189 / NBRC 100395), this protein is Small ribosomal subunit protein uS19.